We begin with the raw amino-acid sequence, 369 residues long: Histone deacetylase-like amidohydrolase (369 aa).

H143 serves as the catalytic Proton donor/acceptor. The Zn(2+) site is built by D180, H182, and D268.

The protein belongs to the histone deacetylase family. As to quaternary structure, homotetramer; dimer of dimers. Zn(2+) is required as a cofactor.

Zinc, and cobalt and nickel at a lesser extent, are able to increase the catalytic activity (2.2-, 1.3- and 1.1-fold respectively) at concentrations of 1 mM. Higher concentrations have an inhibitory effect. Magnesium, manganese and calcium have no effect on activity at concentrations between 0 and 10 mM. At 100 mM, the catalytic activity is increased between 1.2- and 2.1-fold. Hydroxamates like TSA and SAHA inhibit the enzyme. Is also inhibited by azobenzenes, stilbenes and arylazopyrazoles. Exhibits significant levels of protein deacetylase activity comparable to those of eukaryotic HDACs in assays both with fluorogenic peptidic substrates and acetate-radiolabeled histones. Accepts proteins with epsilon-acetylated lysine residues and tritiated-acetate-prelabeled chicken histones as substrates. The natural substrate protein is not yet known. The protein is Histone deacetylase-like amidohydrolase (hdaH) of Alcaligenes sp. (strain DSM 11172) (Bordetella sp. (strain FB188)).